The primary structure comprises 874 residues: Alanine--tRNA ligase (874 aa).

Zn(2+) contacts are provided by His564, His568, Cys665, and His669.

Belongs to the class-II aminoacyl-tRNA synthetase family. Zn(2+) serves as cofactor.

It localises to the cytoplasm. It carries out the reaction tRNA(Ala) + L-alanine + ATP = L-alanyl-tRNA(Ala) + AMP + diphosphate. Its function is as follows. Catalyzes the attachment of alanine to tRNA(Ala) in a two-step reaction: alanine is first activated by ATP to form Ala-AMP and then transferred to the acceptor end of tRNA(Ala). Also edits incorrectly charged Ser-tRNA(Ala) and Gly-tRNA(Ala) via its editing domain. The chain is Alanine--tRNA ligase from Burkholderia lata (strain ATCC 17760 / DSM 23089 / LMG 22485 / NCIMB 9086 / R18194 / 383).